The sequence spans 161 residues: Regulator of ribonuclease activity A (161 aa).

This sequence belongs to the RraA family. In terms of assembly, homotrimer. Binds to both RNA-binding sites in the C-terminal region of Rne and to RhlB.

It is found in the cytoplasm. Its function is as follows. Globally modulates RNA abundance by binding to RNase E (Rne) and regulating its endonucleolytic activity. Can modulate Rne action in a substrate-dependent manner by altering the composition of the degradosome. Modulates RNA-binding and helicase activities of the degradosome. The polypeptide is Regulator of ribonuclease activity A (Erwinia tasmaniensis (strain DSM 17950 / CFBP 7177 / CIP 109463 / NCPPB 4357 / Et1/99)).